A 153-amino-acid polypeptide reads, in one-letter code: Ribosome maturation factor RimP (153 aa).

It belongs to the RimP family.

The protein resides in the cytoplasm. Required for maturation of 30S ribosomal subunits. This chain is Ribosome maturation factor RimP, found in Marinomonas sp. (strain MWYL1).